The sequence spans 152 residues: Endoribonuclease YbeY (152 aa).

Residues histidine 118, histidine 122, and histidine 128 each contribute to the Zn(2+) site.

Belongs to the endoribonuclease YbeY family. It depends on Zn(2+) as a cofactor.

Its subcellular location is the cytoplasm. Functionally, single strand-specific metallo-endoribonuclease involved in late-stage 70S ribosome quality control and in maturation of the 3' terminus of the 16S rRNA. This is Endoribonuclease YbeY from Pelotomaculum thermopropionicum (strain DSM 13744 / JCM 10971 / SI).